Reading from the N-terminus, the 854-residue chain is Disrupted in schizophrenia 1 protein (854 aa).

Over residues 1–18 (MPGGGPQGAPAAAGGGGV) the composition is skewed to gly residues. Disordered stretches follow at residues 1–24 (MPGG…RAGS), 179–205 (SAEL…SHSA), 221–257 (GERG…GPHE), and 278–323 (AQAA…SGDA). An interaction with MAP1A region spans residues 1-292 (MPGGGPQGAP…NSSRPERDMH (292 aa)). Positions 197 to 203 (PTPPGSH) match the Interaction with FBXW7 motif. The segment covering 285–295 (SRPERDMHSLP) has biased composition (basic and acidic residues). Residues 293-696 (SLPDMDPGSS…LGKVWEADLE (404 aa)) are interaction with TRAF3IP1. Residues 296-309 (DMDPGSSSSLDPSL) are compositionally biased toward low complexity. 3 coiled-coil regions span residues 366-394 (ENDD…HFQL), 452-505 (ITRR…CDLT), and 602-666 (WTAK…SVKE). Lys372 is covalently cross-linked (Glycyl lysine isopeptide (Lys-Gly) (interchain with G-Cter in ubiquitin)). Residues 440–597 (LEPTAQDSLH…LLEAKMHAIS (158 aa)) form a required for localization to punctate cytoplasmic foci region. The tract at residues 446–854 (DSLHVSITRR…MTAGVHEAQA (409 aa)) is necessary and sufficient for interaction with PCNT and localization at the centrosome. Positions 598–854 (GNHFWTAKDL…MTAGVHEAQA (257 aa)) are interaction with ATF4 and ATF5. The interval 716–739 (VEDERQMDDLEGAAPPIPPRLHSE) is disordered. Residues 727-854 (GAAPPIPPRL…MTAGVHEAQA (128 aa)) are interaction with PAFAH1B1. Positions 802 to 830 (SHDEDLIQSLRRELQMVKETLQAMILQLQ) form a coiled coil. The interval 802–835 (SHDEDLIQSLRRELQMVKETLQAMILQLQPAKEA) is interaction with NDEL1.

As to quaternary structure, interacts with NDEL1. Interacts with CCDC88A (via C-terminus); the interaction is direct. Interacts with GSK3B. Interacts with tubulin alpha, ACTN2, ANKHD1, ATF4, ATF5, CEP63, EIF3S3, MAP1A, NDEL1, PAFAH1B1, RANBP9, SPTBN4, SYNE1 and TRAF3IP1. Interaction with microtubules may be mediated in part by TRAF3IP1. Interacts (via C-terminal) with PCNT. Interacts with CHCHD6. Interacts with CCDC141. Interacts with FBXW7, the substrate-recognition component of a SCF (SKP1-CUL1-F-box protein) E3 ubiquitin-protein ligase complex; the interaction targets DISC1 for proteasomal degradation. Interacts with ZNF365. Interacts with ATF4; inhibiting ATF4 transcription factor activity by disrupting ATF4 dimerization and DNA-binding. Interacts with PDE4B (isoform PDE4B5). Ubiquitinated. Ubiquitination with 'Lys-48'-linked polyubiquitin chains leads to its proteasomal degradation. In terms of tissue distribution, ubiquitous. Highly expressed in the dentate gyrus of the hippocampus. Also expressed in the temporal and parahippocampal cortices and cells of the white matter.

It localises to the cytoplasm. It is found in the cytoskeleton. The protein localises to the mitochondrion. The protein resides in the microtubule organizing center. Its subcellular location is the centrosome. It localises to the postsynaptic density. Involved in the regulation of multiple aspects of embryonic and adult neurogenesis. Required for neural progenitor proliferation in the ventrical/subventrical zone during embryonic brain development and in the adult dentate gyrus of the hippocampus. Participates in the Wnt-mediated neural progenitor proliferation as a positive regulator by modulating GSK3B activity and CTNNB1 abundance. Plays a role as a modulator of the AKT-mTOR signaling pathway controlling the tempo of the process of newborn neurons integration during adult neurogenesis, including neuron positioning, dendritic development and synapse formation. Inhibits the activation of AKT-mTOR signaling upon interaction with CCDC88A. Regulates the migration of early-born granule cell precursors toward the dentate gyrus during the hippocampal development. Inhibits ATF4 transcription factor activity in neurons by disrupting ATF4 dimerization and DNA-binding. Plays a role, together with PCNT, in the microtubule network formation. This chain is Disrupted in schizophrenia 1 protein, found in Homo sapiens (Human).